The following is a 428-amino-acid chain: UPF0229 protein YeaH (428 aa).

Positions 77-90 (PGNDHFIQNDRIER) are enriched in basic and acidic residues. The segment at 77 to 111 (PGNDHFIQNDRIERPQSGGGGGSGSGQGQASQDGE) is disordered. Residues 93-103 (SGGGGGSGSGQ) show a composition bias toward gly residues.

The protein belongs to the UPF0229 family.

The polypeptide is UPF0229 protein YeaH (Salmonella typhi).